The chain runs to 237 residues: UPF0502 protein RB6530 (237 aa).

Over residues 187 to 202 (ASSAAPSQAESGSTSP) the composition is skewed to polar residues. Positions 187–211 (ASSAAPSQAESGSTSPAKAANDDRI) are disordered.

The protein belongs to the UPF0502 family.

The polypeptide is UPF0502 protein RB6530 (Rhodopirellula baltica (strain DSM 10527 / NCIMB 13988 / SH1)).